The primary structure comprises 192 residues: 3-hydroxyanthranilate 3,4-dioxygenase (192 aa).

Residue R50 coordinates O2. Positions 54, 60, and 102 each coordinate Fe cation. Substrate is bound at residue E60. 2 residues coordinate substrate: R106 and E116. 4 residues coordinate a divalent metal cation: C131, C134, C168, and C171.

The protein belongs to the 3-HAO family. Fe(2+) is required as a cofactor.

It is found in the cytoplasm. It catalyses the reaction 3-hydroxyanthranilate + O2 = (2Z,4Z)-2-amino-3-carboxymuconate 6-semialdehyde. It participates in cofactor biosynthesis; NAD(+) biosynthesis; quinolinate from L-kynurenine: step 3/3. Functionally, catalyzes the oxidative ring opening of 3-hydroxyanthranilate to 2-amino-3-carboxymuconate semialdehyde, which spontaneously cyclizes to quinolinate. This is 3-hydroxyanthranilate 3,4-dioxygenase from Coccidioides immitis (strain RS) (Valley fever fungus).